The primary structure comprises 314 residues: tRNA dimethylallyltransferase (314 aa).

G11 to T18 contributes to the ATP binding site. T13–T18 lines the substrate pocket. Residues D36 to Q39 form an interaction with substrate tRNA region.

The protein belongs to the IPP transferase family. In terms of assembly, monomer. The cofactor is Mg(2+).

It catalyses the reaction adenosine(37) in tRNA + dimethylallyl diphosphate = N(6)-dimethylallyladenosine(37) in tRNA + diphosphate. Functionally, catalyzes the transfer of a dimethylallyl group onto the adenine at position 37 in tRNAs that read codons beginning with uridine, leading to the formation of N6-(dimethylallyl)adenosine (i(6)A). This is tRNA dimethylallyltransferase from Bacillus anthracis.